The primary structure comprises 358 residues: Histamine H2 receptor (358 aa).

At 1 to 22 (MEPNGTVHSCCLDSMALKVTIS) the chain is on the extracellular side. N-linked (GlcNAc...) asparagine glycosylation occurs at asparagine 4. A helical membrane pass occupies residues 23 to 44 (VVLTTLILITIAGNVVVCLAVS). At 45-57 (LNRRLRSLTNCFI) the chain is on the cytoplasmic side. A helical transmembrane segment spans residues 58–81 (VSLAATDLLLGLLVLPFSAIYQLS). The Extracellular portion of the chain corresponds to 82–92 (FTWSFGHVFCN). A disulfide bridge connects residues cysteine 91 and cysteine 173. The chain crosses the membrane as a helical span at residues 93-114 (IYTSLDVMLCTASILNLFMISL). Residues 115–134 (DRYCAVTDPLRYPVLVTPVR) are Cytoplasmic-facing. Residues 135 to 159 (VAISLVFIWVISITLSFLSIHLGWN) form a helical membrane-spanning segment. Residues 160–179 (SRNGTRGGNDTFKCKVQVNE) lie on the Extracellular side of the membrane. The chain crosses the membrane as a helical span at residues 180-203 (VYGLVDGLVTFYLPLLIMCVTYYR). The Cytoplasmic segment spans residues 204 to 233 (IFKIAREQAKRINHISSWKAATIREHKATV). A helical membrane pass occupies residues 234–257 (TLAAVMGAFIICWFPYFTAFVYRG). At 258–266 (LRGDDAINE) the chain is on the extracellular side. The chain crosses the membrane as a helical span at residues 267–288 (AVEGIVLWLGYANSALNPILYA). The Cytoplasmic segment spans residues 289-358 (ALNRDFRTAY…LTHPQGNPIR (70 aa)). Cysteine 304 carries the S-palmitoyl cysteine lipid modification.

This sequence belongs to the G-protein coupled receptor 1 family.

It localises to the cell membrane. In terms of biological role, the H2 subclass of histamine receptors mediates gastric acid secretion. The activity of this receptor is mediated by G proteins which activate adenylyl cyclase. This chain is Histamine H2 receptor (Hrh2), found in Rattus norvegicus (Rat).